The primary structure comprises 378 residues: Ribosomal RNA large subunit methyltransferase G (378 aa).

The protein belongs to the methyltransferase superfamily. RlmG family.

It localises to the cytoplasm. The catalysed reaction is guanosine(1835) in 23S rRNA + S-adenosyl-L-methionine = N(2)-methylguanosine(1835) in 23S rRNA + S-adenosyl-L-homocysteine + H(+). Functionally, specifically methylates the guanine in position 1835 (m2G1835) of 23S rRNA. This is Ribosomal RNA large subunit methyltransferase G from Salmonella paratyphi B (strain ATCC BAA-1250 / SPB7).